A 127-amino-acid polypeptide reads, in one-letter code: Protein MGF 110-14L (127 aa).

The N-terminal stretch at 1 to 17 (MKVLLELLLGYSVHILA) is a signal peptide.

Belongs to the asfivirus MGF 110 family.

Functionally, plays a role in virus cell tropism, and may be required for efficient virus replication in macrophages. The polypeptide is Protein MGF 110-14L (Ornithodoros (relapsing fever ticks)).